We begin with the raw amino-acid sequence, 284 residues long: MAATILQGKEVAQSIRAELANEVVELKKQGVVPGLTVVIVGDDPASHSYVRGKAKGCEEVGISSEIIRKDADITEEELLVIIQQLNENPNVNGILVQLPLPAHISEHAVIEAIAPEKDVDGFHPISIGNMVLGNDTMLPCTPHGIIELIKRTGTQMAGKHAVVIGRSNIVGKPVSLLLQQENATVTMCHSRTQNLEEYTQKADILVVATGRAHMIGKEHVKPGAVVIDVGVNRIETGKLVGDVKFDEVKDVASFITPVPGGVGPMTITMLLKNTVAAAKKQAKQ.

Residues 165-167 (GRS), Ser190, and Val231 contribute to the NADP(+) site.

The protein belongs to the tetrahydrofolate dehydrogenase/cyclohydrolase family. In terms of assembly, homodimer.

It catalyses the reaction (6R)-5,10-methylene-5,6,7,8-tetrahydrofolate + NADP(+) = (6R)-5,10-methenyltetrahydrofolate + NADPH. The enzyme catalyses (6R)-5,10-methenyltetrahydrofolate + H2O = (6R)-10-formyltetrahydrofolate + H(+). The protein operates within one-carbon metabolism; tetrahydrofolate interconversion. Catalyzes the oxidation of 5,10-methylenetetrahydrofolate to 5,10-methenyltetrahydrofolate and then the hydrolysis of 5,10-methenyltetrahydrofolate to 10-formyltetrahydrofolate. The polypeptide is Bifunctional protein FolD (Brevibacillus brevis (strain 47 / JCM 6285 / NBRC 100599)).